A 269-amino-acid polypeptide reads, in one-letter code: MAASAGAGAVIAAPDSRRWLWSVLAAALGLLTAGVSALEVYTPKEIFVANGTQGKLTCKFKSTSTTGGLTSVSWSFQPEGADTTVSFFHYSQGQVYLGNYPPFKDRISWAGDLDKKDASINIENMQFIHNGTYICDVKNPPDIVVQPGHIRLYVVEKENLPVFPVWVVVGIVTAVVLGLTLLISMILAVLYRRKNSKRDYTGCSTSESLSPVKQAPRKSPSDTEGLVKSLPSGSHQGPVIYAQLDHSGGHHSDKINKSESVVYADIRKN.

An N-terminal signal peptide occupies residues 1-35 (MAASAGAGAVIAAPDSRRWLWSVLAAALGLLTAGV). Residues 36–146 (SALEVYTPKE…VKNPPDIVVQ (111 aa)) form the Ig-like V-type domain. Residues 36–162 (SALEVYTPKE…YVVEKENLPV (127 aa)) are Extracellular-facing. N-linked (GlcNAc...) asparagine glycosylation is found at Asn50 and Asn130. Cysteines 58 and 135 form a disulfide. A helical membrane pass occupies residues 163-183 (FPVWVVVGIVTAVVLGLTLLI). Residues 184 to 269 (SMILAVLYRR…SVVYADIRKN (86 aa)) lie on the Cytoplasmic side of the membrane. Positions 199–238 (DYTGCSTSESLSPVKQAPRKSPSDTEGLVKSLPSGSHQGP) are disordered. Over residues 202–211 (GCSTSESLSP) the composition is skewed to polar residues. Ser204, Ser206, Ser208, Ser210, Ser219, and Ser221 each carry phosphoserine. The ITIM motif 1 signature appears at 239-244 (VIYAQL). Tyr241 bears the Phosphotyrosine mark. Residue Ser260 is modified to Phosphoserine. An ITIM motif 2 motif is present at residues 261 to 266 (VVYADI). Residue Tyr263 is modified to Phosphotyrosine.

It belongs to the myelin P0 protein family. Interacts with phosphorylated PTPN11/SHP-2. Phosphorylated on tyrosine residues upon stimulation with pervanadate and concanavalin-A (ConA). Phosphorylation at Tyr-241 and Tyr-263 is required for interaction with PTPN11/SHP-2. Dephosphorylated by PTPN11/SHP-2 (in vitro). In terms of processing, N-glycosylated. N-glycosylation is required for concanavalin A binding. Widely expressed with highest levels in heart, placenta, kidney and pancreas. Isoform 3 is relatively abundant in hematopoietic tissues and fetal liver. Isoform 1 and isoform 3 are expressed in CD14- PB monocytes and pre-B cell progenitors. Isoform 3 appears to be the major isoform in CD34- promyelocytic and promonocytic cells. During differentiation in monocytic cells, the expression level of isoform 3 decreases and that of isoform 1 increases. Isoform 1 is prominent in stromal cells and, to a lesser extent, in umbilical vein endothelial cells and erythroid progenitors. Isoform 2 is expressed in a erythroid progenitor cell line.

Its subcellular location is the membrane. Cell surface receptor, which is involved in signal transduction processes. Recruits PTPN11/SHP-2 to the cell membrane and is a putative substrate of PTPN11/SHP-2. Is a major receptor for concanavalin-A (ConA) and is involved in cellular signaling induced by ConA, which probably includes Src family tyrosine-protein kinases. Isoform 3 seems to have a dominant negative role; it blocks tyrosine phosphorylation of MPZL1 induced by ConA. Isoform 1, but not isoform 2 and isoform 3, may be involved in regulation of integrin-mediated cell motility. The chain is Myelin protein zero-like protein 1 (MPZL1) from Homo sapiens (Human).